The following is a 434-amino-acid chain: Beta-enolase (434 aa).

Position 2 is an N-acetylalanine (A2). T72 carries the phosphothreonine modification. Residues S83 and S157 each carry the phosphoserine modification. 2 residues coordinate substrate: H158 and E167. At S176 the chain carries Phosphoserine. A Phosphothreonine modification is found at T205. Residue E210 is the Proton donor of the active site. Position 229 is a phosphothreonine (T229). Position 236 is a phosphotyrosine (Y236). D245 contacts Mg(2+). S263 is subject to Phosphoserine. Substrate contacts are provided by E293 and D318. Mg(2+)-binding residues include E293 and D318. K343 (proton acceptor) is an active-site residue. Substrate-binding positions include 370–373 (SHRS) and K394.

The protein belongs to the enolase family. As to quaternary structure, mammalian enolase is composed of 3 isozyme subunits, alpha, beta and gamma, which can form homodimers or heterodimers which are cell-type and development-specific. In vitro, interacts with several glycolytic enzymes including PKM, PGM, CKM and ALDO. Also binds PLG and troponin, in vitro. Interacts with PNKD. The cofactor is Mg(2+). In terms of tissue distribution, brain (at protein level). The alpha/alpha homodimer is expressed in embryo and in most adult tissues. The alpha/beta heterodimer and the beta/beta homodimer are found in striated muscle, and the alpha/gamma heterodimer and the gamma/gamma homodimer in neurons. In striated muscle, the fiber-type order of ENO3 expression is IIB &gt; IIX &gt; IIA &gt; I.

It localises to the cytoplasm. The catalysed reaction is (2R)-2-phosphoglycerate = phosphoenolpyruvate + H2O. The protein operates within carbohydrate degradation; glycolysis; pyruvate from D-glyceraldehyde 3-phosphate: step 4/5. Glycolytic enzyme that catalyzes the conversion of 2-phosphoglycerate to phosphoenolpyruvate. Appears to have a function in striated muscle development and regeneration. The chain is Beta-enolase (Eno3) from Mus musculus (Mouse).